A 612-amino-acid polypeptide reads, in one-letter code: Dihydroxy-acid dehydratase (612 aa).

Mg(2+) is bound at residue D81. Residue C122 coordinates [2Fe-2S] cluster. Mg(2+) is bound by residues D123 and K124. The residue at position 124 (K124) is an N6-carboxylysine. C195 is a [2Fe-2S] cluster binding site. Mg(2+) is bound at residue E491. The Proton acceptor role is filled by S517.

Belongs to the IlvD/Edd family. In terms of assembly, homodimer. [2Fe-2S] cluster serves as cofactor. The cofactor is Mg(2+).

The enzyme catalyses (2R)-2,3-dihydroxy-3-methylbutanoate = 3-methyl-2-oxobutanoate + H2O. The catalysed reaction is (2R,3R)-2,3-dihydroxy-3-methylpentanoate = (S)-3-methyl-2-oxopentanoate + H2O. It functions in the pathway amino-acid biosynthesis; L-isoleucine biosynthesis; L-isoleucine from 2-oxobutanoate: step 3/4. It participates in amino-acid biosynthesis; L-valine biosynthesis; L-valine from pyruvate: step 3/4. In terms of biological role, functions in the biosynthesis of branched-chain amino acids. Catalyzes the dehydration of (2R,3R)-2,3-dihydroxy-3-methylpentanoate (2,3-dihydroxy-3-methylvalerate) into 2-oxo-3-methylpentanoate (2-oxo-3-methylvalerate) and of (2R)-2,3-dihydroxy-3-methylbutanoate (2,3-dihydroxyisovalerate) into 2-oxo-3-methylbutanoate (2-oxoisovalerate), the penultimate precursor to L-isoleucine and L-valine, respectively. The protein is Dihydroxy-acid dehydratase of Rhizobium meliloti (strain 1021) (Ensifer meliloti).